The chain runs to 127 residues: MSRLFRRLSTLLLCSLLVLGVWLTQPLSVQAAEIRNKVDDKIAETAGKVDLNNASVRRFQQYPGMYPTLAGKIVVGGPYDQVEDVLKLDLTERQKELFEKYKENFTVTDPEIALNEGFDRINDGQYR.

Residues 1–31 form the signal peptide; sequence MSRLFRRLSTLLLCSLLVLGVWLTQPLSVQA.

Belongs to the PsbU family. In terms of assembly, PSII is composed of 1 copy each of membrane proteins PsbA, PsbB, PsbC, PsbD, PsbE, PsbF, PsbH, PsbI, PsbJ, PsbK, PsbL, PsbM, PsbT, PsbX, PsbY, PsbZ, Psb30/Ycf12, peripheral proteins PsbO, CyanoQ (PsbQ), PsbU, PsbV and a large number of cofactors. It forms dimeric complexes.

It is found in the cellular thylakoid membrane. In terms of biological role, one of the extrinsic, lumenal subunits of photosystem II (PSII). PSII is a light-driven water plastoquinone oxidoreductase, using light energy to abstract electrons from H(2)O, generating a proton gradient subsequently used for ATP formation. The extrinsic proteins stabilize the structure of photosystem II oxygen-evolving complex (OEC), the ion environment of oxygen evolution and protect the OEC against heat-induced inactivation. This is Photosystem II extrinsic protein U from Synechococcus sp. (strain RCC307).